The sequence spans 448 residues: Methylenetetrahydrofolate--tRNA-(uracil-5-)-methyltransferase TrmFO (448 aa).

13–18 is a binding site for FAD; the sequence is GAGLAG.

This sequence belongs to the MnmG family. TrmFO subfamily. Requires FAD as cofactor.

Its subcellular location is the cytoplasm. The catalysed reaction is uridine(54) in tRNA + (6R)-5,10-methylene-5,6,7,8-tetrahydrofolate + NADH + H(+) = 5-methyluridine(54) in tRNA + (6S)-5,6,7,8-tetrahydrofolate + NAD(+). It catalyses the reaction uridine(54) in tRNA + (6R)-5,10-methylene-5,6,7,8-tetrahydrofolate + NADPH + H(+) = 5-methyluridine(54) in tRNA + (6S)-5,6,7,8-tetrahydrofolate + NADP(+). Its function is as follows. Catalyzes the folate-dependent formation of 5-methyl-uridine at position 54 (M-5-U54) in all tRNAs. The polypeptide is Methylenetetrahydrofolate--tRNA-(uracil-5-)-methyltransferase TrmFO (Streptococcus pyogenes serotype M5 (strain Manfredo)).